A 433-amino-acid polypeptide reads, in one-letter code: UPF0597 protein Spea_0809 (433 aa).

This sequence belongs to the UPF0597 family.

This Shewanella pealeana (strain ATCC 700345 / ANG-SQ1) protein is UPF0597 protein Spea_0809.